Consider the following 85-residue polypeptide: Small ribosomal subunit protein uS17 (85 aa).

This sequence belongs to the universal ribosomal protein uS17 family. As to quaternary structure, part of the 30S ribosomal subunit.

One of the primary rRNA binding proteins, it binds specifically to the 5'-end of 16S ribosomal RNA. This Desulforudis audaxviator (strain MP104C) protein is Small ribosomal subunit protein uS17.